A 479-amino-acid polypeptide reads, in one-letter code: MNRPHSCLSFCWMYFAASGIRAVETANGKYAQKLFSDLFEDYSSALRPVEDTDAVLNVTLQVTLSQIKDMDERNQILTAYLWIRQTWHDAYLTWDRDQYDRLDSIRIPSDLVWRPDIVLYNKADDESSEPVNTNVVLRYDGLITWDSPAITKSSCVVDVTYFPFDSQQCNLTFGSWTYNGNQVDIFNALDSGDLSDFIEDVEWEVHGMPAVKNVISYGCCSEPYPDVTFTLLLKRRSSFYIVNLLIPCVLISFLAPLSFYLPAASGEKVSLGVTILLAMTVFQLMVAEIMPASENVPLIGKYYIATMALITASTALTIMVMNIHFCGAEARPVPHWAKVVILKYMSRILFVYDVGESCLSPRHSQEPEQVTKVYSKLPESNLKTSRNKDLSRKKEVRKLLKNDLGYQGGIPQNTDSYCARYEALTKNIEYIAKCLKDHKATNSKGSEWKKVAKVIDRFFMWIFFAMVFVMTVLIIARAD.

The signal sequence occupies residues 1–25 (MNRPHSCLSFCWMYFAASGIRAVET). The Extracellular segment spans residues 26–237 (ANGKYAQKLF…TFTLLLKRRS (212 aa)). N-linked (GlcNAc...) asparagine glycosylation is present at N57. C155 and C169 are oxidised to a cystine. Residue N170 is glycosylated (N-linked (GlcNAc...) asparagine). 2 residues coordinate Na(+): S191 and D193. A disulfide bond links C219 and C220. Helical transmembrane passes span 238-262 (SFYIVNLLIPCVLISFLAPLSFYLP), 269-287 (VSLGVTILLAMTVFQLMVA), and 302-323 (YYIATMALITASTALTIMVMNI). The Cytoplasmic segment spans residues 324-457 (HFCGAEARPV…WKKVAKVIDR (134 aa)). The chain crosses the membrane as a helical span at residues 458-476 (FFMWIFFAMVFVMTVLIIA).

The protein belongs to the ligand-gated ion channel (TC 1.A.9) family. Acetylcholine receptor (TC 1.A.9.1) subfamily. Alpha-9/CHRNA9 sub-subfamily. Forms homo- or heterooligomeric channels in conjunction with CHRNA10. The native outer hair cell receptor may be composed of CHRNA9:CHRNA10 heterooligomers. Found in the stoichiometric form (CHRNA9)2:(CHRNA10)3. In terms of tissue distribution, detected in the nasal epithelium, in the outer hair cells of the cochlea, in the pars tuberalis of the hypophysis, and in the developing muscle of the tongue. Also expressed in the neurons of dorsal root ganglia.

It is found in the synaptic cell membrane. The protein resides in the cell membrane. It carries out the reaction Ca(2+)(in) = Ca(2+)(out). The enzyme catalyses Mg(2+)(in) = Mg(2+)(out). The catalysed reaction is K(+)(in) = K(+)(out). It catalyses the reaction Na(+)(in) = Na(+)(out). Its activity is regulated as follows. Activated by a myriad of ligands such as acetylcholine. AChR activity is inhibited by the antagonist alpha-conotoxins RgIA and GeXXA, small disulfide-constrained peptides from cone snails. Functionally, component of neuronal acetylcholine receptors (nAChRs) that function as pentameric, ligand-gated cation channels with high calcium permeability among other activities. nAChRs are excitatory neurotrasnmitter receptors formed by a collection of nAChR subunits known to mediate synaptic transmission in the nervous system and the neuromuscular junction. Each nAchR subunit confers differential attributes to channel properties, including activation, deactivation and desensitization kinetics, pH sensitivity, cation permeability, and binding to allosteric modulators. Forms either homopentamers or heteropentamers with CHRNA10. Expressed in the inner ear, in sympathetic neurons and in other non-neuronal cells, such as skin keratinocytes and lymphocytes. nAChR formed by CHRNA9:CHRNA10 mediate central nervous system control of auditory and vestibular sensory processing. The channel is permeable to a range of divalent cations including calcium, the influx of which may activate a potassium current which hyperpolarizes the cell membrane. In the ear, mediates synaptic transmission between efferent olivocochlear fibers and hair cells of the cochlea, this may lead to a reduction in basilar membrane motion, altering the activity of auditory nerve fibers and reducing the range of dynamic hearing. This may protect against acoustic trauma. May also regulate keratinocyte adhesion. This Rattus norvegicus (Rat) protein is Neuronal acetylcholine receptor subunit alpha-9 (Chrna9).